Consider the following 95-residue polypeptide: Large ribosomal subunit protein uL23 (95 aa).

Belongs to the universal ribosomal protein uL23 family. As to quaternary structure, part of the 50S ribosomal subunit. Contacts protein L29, and trigger factor when it is bound to the ribosome.

In terms of biological role, one of the early assembly proteins it binds 23S rRNA. One of the proteins that surrounds the polypeptide exit tunnel on the outside of the ribosome. Forms the main docking site for trigger factor binding to the ribosome. The protein is Large ribosomal subunit protein uL23 of Geobacillus thermodenitrificans (strain NG80-2).